The sequence spans 285 residues: Protein phosphatase 1 regulatory subunit 3C (285 aa).

The PP1-binding motif motif lies at 72-75; that stretch reads KVVF. One can recognise a CBM21 domain in the interval 133 to 241; sequence RKRLMKNSVC…NNNGKNYALV (109 aa).

Interacts with PPP1CC catalytic subunit of PP1 and associates with glycogen. Forms complexes with glycogen phosphorylase, glycogen synthase and phosphorylase kinase which is necessary for its regulation of PP1 activity. In terms of tissue distribution, ubiquitously expressed in the examined tissues including brain, muscle, liver and spleen under normoxic condition. Its expression is higher in insulin sensitive tissues (liver and muscle) than in the brain and spleen. Significantly increased expression in the liver and muscle under short-term (1-12 hours) hypoxia exposure. Significantly increased expression after long-term (natural) hypoxia exposure in liver and spleen. No significant differences in expression in brain for any time periods.

In terms of biological role, acts as a glycogen-targeting subunit for PP1 and regulates its activity. Activates glycogen synthase, reduces glycogen phosphorylase activity and limits glycogen breakdown. This chain is Protein phosphatase 1 regulatory subunit 3C, found in Clarias batrachus (Walking catfish).